The chain runs to 314 residues: DNA-directed RNA polymerase subunit alpha (314 aa).

Residues 1–228 (MIEIEKPRIE…EHLNIFVSLT (228 aa)) form an alpha N-terminal domain (alpha-NTD) region. The alpha C-terminal domain (alpha-CTD) stretch occupies residues 245–314 (KEKVLEMSIE…DLGLGLRKED (70 aa)).

It belongs to the RNA polymerase alpha chain family. In terms of assembly, homodimer. The RNAP catalytic core consists of 2 alpha, 1 beta, 1 beta' and 1 omega subunit. When a sigma factor is associated with the core the holoenzyme is formed, which can initiate transcription.

It catalyses the reaction RNA(n) + a ribonucleoside 5'-triphosphate = RNA(n+1) + diphosphate. DNA-dependent RNA polymerase catalyzes the transcription of DNA into RNA using the four ribonucleoside triphosphates as substrates. This is DNA-directed RNA polymerase subunit alpha from Staphylococcus epidermidis (strain ATCC 35984 / DSM 28319 / BCRC 17069 / CCUG 31568 / BM 3577 / RP62A).